A 549-amino-acid chain; its full sequence is Leiomodin-2 (549 aa).

Positions 1–42 (MSTFGYRRGLSKYESIDEDELLASLTAEELKELERELEDIEP) are tropomyosin-binding. Residues 1-47 (MSTFGYRRGLSKYESIDEDELLASLTAEELKELERELEDIEPDRNLP) are interaction with tropomyosin alpha. 3 interaction with actin regions span residues 1–164 (MSTF…PDNS), 165–499 (KPKT…KEIK), and 523–542 (AHEN…LRRV). A phosphoserine mark is found at serine 11, serine 15, and serine 24. Disordered stretches follow at residues 91–166 (KLAE…NSKP), 179–200 (TNGN…HPCG), 358–455 (MDKQ…PGKK), and 469–534 (ESAQ…IRGS). 2 stretches are compositionally biased toward acidic residues: residues 95–105 (EDKEESEEELI) and 113–143 (VSEE…EEVT). Composition is skewed to polar residues over residues 150-163 (INGT…NPDN) and 179-192 (TNGN…NTES). The segment covering 358–376 (MDKQRQKRMQEQKQQEGHD) has biased composition (basic and acidic residues). Polar residues predominate over residues 390–401 (TPGSSPYASPRQ). Serine 406 bears the Phosphoserine mark. Residues 420–452 (PPSPVAPPPPPPPPPLPPHMLPPPPPPPAPPLP) are compositionally biased toward pro residues. Residues 457–515 (ITRNIAEVIKQQESAQRALQNGQRKKKGKKVKKQPNNILKEIKNSLRSVQEKKMEESSR) adopt a coiled-coil conformation. Positions 469–478 (ESAQRALQNG) are enriched in polar residues. Residues 479–489 (QRKKKGKKVKK) show a composition bias toward basic residues. The segment covering 496–514 (KEIKNSLRSVQEKKMEESS) has biased composition (basic and acidic residues). Residues 523–542 (AHENLMEAIRGSSIRQLRRV) enclose the WH2 domain.

It belongs to the tropomodulin family. As to quaternary structure, can bind at least three actin monomers and thereby provides a nucleus for actin filament formation. Interacts (via N-terminus) with tropomyosin alpha (TPM1) (via N-terminus). May also interact with TPM2 (via N-terminus). Interacts with FLII.

It localises to the cytoplasm. The protein localises to the myofibril. It is found in the sarcomere. The protein resides in the m line. Its subcellular location is the cytoskeleton. Its function is as follows. Mediates nucleation of actin filaments and thereby promotes actin polymerization. Plays a role in the regulation of actin filament length. Required for normal sarcomere organization in the heart, and for normal heart function. The protein is Leiomodin-2 (Lmod2) of Rattus norvegicus (Rat).